A 272-amino-acid polypeptide reads, in one-letter code: Probable protein VP2 (272 aa).

Disordered stretches follow at residues 50–116 and 195–272; these read GGSR…DFAD and YSPA…SSSS. Pro residues predominate over residues 78-90; sequence APDPPAGNQPPAL. A compositionally biased stretch (gly residues) spans 94–108; the sequence is GDGGNESGAGGGESG. A compositionally biased stretch (basic and acidic residues) spans 218 to 230; it reads SKRDNKENRDRGR. Residues 231 to 246 are compositionally biased toward basic residues; the sequence is AKARAKQKPKKRRRRA. Over residues 249–272 the composition is skewed to low complexity; that stretch reads ESSSSSSSKSSFNSEEGSSASSSS.

In terms of processing, phosphorylated at C-terminal serines.

The polypeptide is Probable protein VP2 (Homo sapiens (Human)).